A 180-amino-acid chain; its full sequence is Thebaine synthase 1 (180 aa).

A thebaine-binding site is contributed by Ser-96. His-111 (proton acceptor) is an active-site residue. Thr-127 serves as a coordination point for thebaine.

Belongs to the MLP family. In terms of assembly, homodimer (allosteric) and oligomers. As to expression, expressed in poppy latex.

The catalysed reaction is (7S)-O-acetylsalutaridinol = thebaine + acetate + H(+). It functions in the pathway alkaloid biosynthesis; morphine biosynthesis. Its function is as follows. Catalyzes the formation of thebaine from (7S)-salutaridinol 7-O-acetate at the expense of labile hydroxylated by-products, which are preferentially produced by spontaneous allylic elimination. The chain is Thebaine synthase 1 from Papaver somniferum (Opium poppy).